A 487-amino-acid polypeptide reads, in one-letter code: Cytochrome P450 2C21 (487 aa).

Residue Cys-432 coordinates heme.

This sequence belongs to the cytochrome P450 family. Heme is required as a cofactor. Liver.

It localises to the endoplasmic reticulum membrane. It is found in the microsome membrane. It carries out the reaction an organic molecule + reduced [NADPH--hemoprotein reductase] + O2 = an alcohol + oxidized [NADPH--hemoprotein reductase] + H2O + H(+). Its function is as follows. Cytochromes P450 are a group of heme-thiolate monooxygenases. In liver microsomes, this enzyme is involved in an NADPH-dependent electron transport pathway. It oxidizes a variety of structurally unrelated compounds, including steroids, fatty acids, and xenobiotics. Showed testosterone hydrolase activity. The polypeptide is Cytochrome P450 2C21 (CYP2C21) (Canis lupus familiaris (Dog)).